The primary structure comprises 648 residues: Actin-related protein 5 (648 aa).

The disordered stretch occupies residues 34–59 (LTKPRKDRKKEAAASEGSASQTTVEQ). 2 coiled-coil regions span residues 277-311 (TAEQ…EQQL) and 340-364 (TLED…RAQS). Disordered regions lie at residues 357 to 385 (RAQE…PEGM) and 403 to 455 (GRKQ…GMND). Residues 414-428 (EQAKRHTHAAQERMR) are compositionally biased toward basic and acidic residues. Serine 471 and serine 473 each carry phosphoserine.

Belongs to the actin family. ARP5 subfamily. As to quaternary structure, component of the chromatin remodeling Ino80 complex.

The protein localises to the nucleus. Proposed core component of the chromatin remodeling Ino80 complex which is involved in transcriptional regulation, DNA replication and probably DNA repair. The chain is Actin-related protein 5 from Drosophila melanogaster (Fruit fly).